The following is a 236-amino-acid chain: MRLRRKPWARPELAACDFYVDDPPSYKGRWREFFDNSNPIHLELGCGKGGFISELAADNQNINYIAVDIKSEVLALAKRKIEKEYKERGIQEIKNIRLMSHNIELIDNMLDTVDFIEKIYINFCNPWPKTPYKKKRLTHGKQLIKYKQFLASGAEIWFKTDDDGLFEDSVKYFEENGFIIKYKTWNLHESGFGENVPTEHEIMFSEEGIPIKFLIAEYKQKIHQAVCIGINIKEEN.

E43, D68, N102, and N125 together coordinate S-adenosyl-L-methionine. The substrate site is built by K129 and D161.

It belongs to the class I-like SAM-binding methyltransferase superfamily. TrmB family.

It carries out the reaction guanosine(46) in tRNA + S-adenosyl-L-methionine = N(7)-methylguanosine(46) in tRNA + S-adenosyl-L-homocysteine. The protein operates within tRNA modification; N(7)-methylguanine-tRNA biosynthesis. Catalyzes the formation of N(7)-methylguanine at position 46 (m7G46) in tRNA. This Ruminiclostridium cellulolyticum (strain ATCC 35319 / DSM 5812 / JCM 6584 / H10) (Clostridium cellulolyticum) protein is tRNA (guanine-N(7)-)-methyltransferase.